The sequence spans 243 residues: Vesicle-associated membrane protein-associated protein B (243 aa).

N-acetylalanine is present on Ala2. Over 2–218 (AKVEQVLSLE…PASAMAGKEE (217 aa)) the chain is Cytoplasmic. The 118-residue stretch at 7 to 124 (VLSLEPQHEL…MDSKLRCVFE (118 aa)) folds into the MSP domain. Ser146 is subject to Phosphoserine. Lys147 participates in a covalent cross-link: Glycyl lysine isopeptide (Lys-Gly) (interchain with G-Cter in SUMO1). Thr150 bears the Phosphothreonine mark. Phosphoserine is present on residues Ser158, Ser159, and Ser160. Residues 161 to 196 (LDDTEVKKVMEECKRLQSEVQRLREENKQFKEEDGL) adopt a coiled-coil conformation. The segment covering 186–197 (ENKQFKEEDGLR) has biased composition (basic and acidic residues). A disordered region spans residues 186 to 214 (ENKQFKEEDGLRMRKTAQSNSPAPASAMA). Ser206 bears the Phosphoserine mark. The helical; Anchor for type IV membrane protein transmembrane segment at 219–239 (GLSTRLLALVVLFFIVGVIIG) threads the bilayer.

This sequence belongs to the VAMP-associated protein (VAP) (TC 9.B.17) family. As to quaternary structure, homodimer, and heterodimer with VAPA. Interacts with VAMP1 and VAMP2. Interacts (via MSP domain) with ZFYVE27. Interacts with RMDN3. Interacts with KIF5A in a ZFYVE27-dependent manner. Interacts (via MSP domain) with STARD3 (via phospho-FFAT motif). Interacts with STARD3NL (via FFAT motif). Interacts with CERT1. Interacts with PLEKHA3 and SACM1L to form a ternary complex. Interacts with VPS13A (via FFAT motif). Interacts with RB1CC1 (via phosphorylated FFAT motif), MIGA2 (via phosphorylated FFAT motif), RMDN3 (via phosphorylated FFAT motif), OSBPL1A (via FFAT motif), KCNB1 (via phosphorylated FFAT motif) and KCNB2 (via phosphorylated FFAT motif). Interacts (via MSP domain) with WDR44 (via FFAT motif); the interactions connect the endoplasmic reticulum (ER) with the endosomal tubule.

The protein localises to the endoplasmic reticulum membrane. Endoplasmic reticulum (ER)-anchored protein that mediates the formation of contact sites between the ER and endosomes via interaction with FFAT motif-containing proteins such as STARD3 or WDR44. Interacts with STARD3 in a FFAT motif phosphorylation dependent manner. Via interaction with WDR44 participates in neosynthesized protein export. Participates in the endoplasmic reticulum unfolded protein response (UPR) by inducing ERN1/IRE1 activity. Involved in cellular calcium homeostasis regulation. This Bos taurus (Bovine) protein is Vesicle-associated membrane protein-associated protein B.